The primary structure comprises 125 residues: Succinate dehydrogenase cytochrome b556 subunit (125 aa).

Topologically, residues 1–22 (MNAKRPVNLDLTKFHFPPMAIL) are cytoplasmic. Residues 23–48 (SIGHRISGFVLFLCMPLMFYLLHRAT) form a helical membrane-spanning segment. The Periplasmic segment spans residues 49 to 65 (ASAESFYHLHQLLLHNG). A helical transmembrane segment spans residues 66-86 (WIKLAVWIMLSATLFHLFAGI). H81 is a heme binding site. Residues 87-104 (RHLAMDLGFWESVPEGRI) lie on the Cytoplasmic side of the membrane. The chain crosses the membrane as a helical span at residues 105 to 125 (SAYTVFVVSFIAIVLAGVWIW).

It belongs to the cytochrome b560 family. Part of an enzyme complex containing four subunits: a flavoprotein, an iron-sulfur protein, plus two membrane-anchoring proteins, SdhC and SdhD. The complex can form homotrimers. Heme serves as cofactor.

Its subcellular location is the cell inner membrane. It participates in carbohydrate metabolism; tricarboxylic acid cycle. Functionally, membrane-anchoring subunit of succinate dehydrogenase (SDH). This chain is Succinate dehydrogenase cytochrome b556 subunit (sdhC), found in Coxiella burnetii (strain RSA 493 / Nine Mile phase I).